The chain runs to 1593 residues: THO complex subunit 2 (1593 aa).

Residues 1 to 163 (MAAAAVVVPA…KLFYKQQKFN (163 aa)) form an anchor domain; interaction with THOC5 and THOC7 region. The segment at 164–534 (LLREENEGYA…GQWKNETYNS (371 aa)) is bow domain; interaction with THOC1 dock domain and THOC3. The interval 322-341 (KMDEREKEKEKEEEKVEKPP) is disordered. The MIF4G domain; interaction with THOC3 and DDX39B stretch occupies residues 535–686 (HPLLVKVKAQ…LILKEVVQKM (152 aa)). The stern domain stretch occupies residues 687-1174 (AGIEITEEMT…LAMGYSGQLK (488 aa)). Residues 896–965 (HTSYEREVNK…LKLEKDNWLL (70 aa)) are a coiled coil. A Nuclear localization signal motif is present at residues 923 to 928 (KKKKEK). The charged domain stretch occupies residues 1175–1593 (SRKSYMIPEN…KHHKSSDKHR (419 aa)). The interval 1184 to 1593 (NEFHHKDPPP…KHHKSSDKHR (410 aa)) is disordered. The segment covering 1218-1234 (KSDESSTEETDKSRERS) has biased composition (basic and acidic residues). Residue Ser1222 is modified to Phosphoserine. Low complexity predominate over residues 1251-1263 (GNSSNGNSGSNSN). 3 stretches are compositionally biased toward basic and acidic residues: residues 1265–1285 (AVKE…KEKT), 1294–1343 (VLGK…EKFK), and 1353–1383 (STQE…KGGE). Residue Thr1385 is modified to Phosphothreonine. Phosphoserine occurs at positions 1390, 1393, and 1417. The span at 1416-1425 (PSPSHSSTVK) shows a compositional bias: polar residues. Phosphothreonine is present on Thr1443. Residues 1449-1504 (KSKEREMDKKDLDKSRERSREREKKDEKDRKERKRDHSNNDREVPPDLTKRRKEEN) show a composition bias toward basic and acidic residues. A phosphoserine mark is found at Ser1450, Ser1486, and Ser1516. Residues 1524 to 1582 (NEKDKEKNKSKSSGKEKGSDSFKSEKMDKISSGGKKESRHDKEKIEKKEKRDSSGGKEE) are compositionally biased toward basic and acidic residues. The span at 1583–1593 (KKHHKSSDKHR) shows a compositional bias: basic residues.

The protein belongs to the THOC2 family. In terms of assembly, component of the THO subcomplex, which is composed of THOC1, THOC2, THOC3, THOC5, THOC6 and THOC7. The THO subcomplex interacts with DDX39B to form the THO-DDX39B complex which multimerizes into a 28-subunit tetrameric assembly. Component of the transcription/export (TREX) complex at least composed of ALYREF/THOC4, DDX39B, SARNP/CIP29, CHTOP and the THO subcomplex; in the complex interacts with THOC1, THOC3, THOC5, THOC7 and DDX39B. TREX seems to have a dynamic structure involving ATP-dependent remodeling. Interacts with POLDIP3 and ZC3H11A. In terms of tissue distribution, expressed in the hippocampus and the cerebral cortex.

Its subcellular location is the nucleus. The protein resides in the nucleus speckle. It localises to the cytoplasm. Component of the THO subcomplex of the TREX complex which is thought to couple mRNA transcription, processing and nuclear export, and which specifically associates with spliced mRNA and not with unspliced pre-mRNA. Required for efficient export of polyadenylated RNA and spliced mRNA. The THOC1-THOC2-THOC3 core complex alone is sufficient to bind export factor NXF1-NXT1 and promote ATPase activity of DDX39B; in the complex THOC2 is the only component that directly interacts with DDX39B. TREX is recruited to spliced mRNAs by a transcription-independent mechanism, binds to mRNA upstream of the exon-junction complex (EJC) and is recruited in a splicing- and cap-dependent manner to a region near the 5' end of the mRNA where it functions in mRNA export to the cytoplasm via the TAP/NXF1 pathway. Required for NXF1 localization to the nuclear rim. THOC2 (and probably the THO complex) is involved in releasing mRNA from nuclear speckle domains. In terms of biological role, (Microbial infection) The TREX complex is essential for the export of Kaposi's sarcoma-associated herpesvirus (KSHV) intronless mRNAs and infectious virus production. The protein is THO complex subunit 2 (THOC2) of Homo sapiens (Human).